Reading from the N-terminus, the 287-residue chain is Myogenin (287 aa).

Phosphoserine; by CaMK2G is present on residues Ser-77 and Ser-79. The bHLH domain maps to 81–132; the sequence is DRRRAATLREKRRLKKVNEAFEALKRSTLLNPNQRLPKVEILRSAIQYIERL. Thr-87 is modified (phosphothreonine; by CaMK2G).

In terms of assembly, homodimer and heterodimer with E12; heterodimerization enhances MYOG DNA-binding and transcriptional activities. Interacts with SMARCA4/BRG1/BAF190A. Interacts (via C-terminal region) with SSRP1 and SUPT16H; the interaction is indicative of an interaction with the FACT complex. Interacts with CSRP3. In terms of processing, phosphorylated by CAMK2G on threonine and serine amino acids in a muscle activity-dependent manner. Phosphorylation of Thr-87 impairs both DNA-binding and trans-activation functions in contracting muscles. Expressed in muscle (at protein level).

The protein resides in the nucleus. Its function is as follows. Acts as a transcriptional activator that promotes transcription of muscle-specific target genes and plays a role in muscle differentiation, cell cycle exit and muscle atrophy. Essential for the development of functional embryonic skeletal fiber muscle differentiation. However is dispensable for postnatal skeletal muscle growth; phosphorylation by CAMK2G inhibits its transcriptional activity in respons to muscle activity. Required for the recruitment of the FACT complex to muscle-specific promoter regions, thus promoting gene expression initiation. During terminal myoblast differentiation, plays a role as a strong activator of transcription at loci with an open chromatin structure previously initiated by MYOD1. Together with MYF5 and MYOD1, co-occupies muscle-specific gene promoter core regions during myogenesis. Also cooperates with myocyte-specific enhancer factor MEF2D and BRG1-dependent recruitment of SWI/SNF chromatin-remodeling enzymes to alter chromatin structure at myogenic late gene promoters. Facilitates cell cycle exit during terminal muscle differentiation through the up-regulation of miR-20a expression, which in turn represses genes involved in cell cycle progression. Binds to the E-box containing (E1) promoter region of the miR-20a gene. Also plays a role in preventing reversal of muscle cell differentiation. Contributes to the atrophy-related gene expression in adult denervated muscles. Induces fibroblasts to differentiate into myoblasts. This is Myogenin (Myog) from Rattus norvegicus (Rat).